A 445-amino-acid polypeptide reads, in one-letter code: MIDRPIHVIGGGLAGTEAAWQIAQAGIPVILHEMRPIRSSPAHHSQFLAELVCSNSFGAMAVDRATGLLHEELRRLNSLVIAQADQHSVPAGGALAVDRGVFSRNLTEILANHPLVTLKRQEITEIPRDGIVVLTTGPLTSAALAADLQNFAGLDYLSFFDAASPIILGESIDRSIAFLASRYDKGEAAYLNCPMDREQYLHFWQELKQAEQAELKDFERENAKFFEACLPIEELASRGEDTMRFGPLKPVGLADPRYPDQRPYAVIQLRMEDKAGQLWNMVGFQTNLKWGEQTRVFRLIPGLEKAEFVRMGVMHKNTFINSPQLLSSSLQFKSRPTLLAAGQLIGTEGYTAAAAGGWLAGTNAARLALGLETVTLPTTTMMGSLFEFISSAEPKHFQPMPPNFGILPNFTRKIRNKRERYGQYADRSLQDLEAWMNQLKTPCLV.

10 to 15 contacts FAD; that stretch reads GGGLAG.

This sequence belongs to the MnmG family. TrmFO subfamily. FAD serves as cofactor.

It is found in the cytoplasm. It carries out the reaction uridine(54) in tRNA + (6R)-5,10-methylene-5,6,7,8-tetrahydrofolate + NADH + H(+) = 5-methyluridine(54) in tRNA + (6S)-5,6,7,8-tetrahydrofolate + NAD(+). The catalysed reaction is uridine(54) in tRNA + (6R)-5,10-methylene-5,6,7,8-tetrahydrofolate + NADPH + H(+) = 5-methyluridine(54) in tRNA + (6S)-5,6,7,8-tetrahydrofolate + NADP(+). Functionally, catalyzes the folate-dependent formation of 5-methyl-uridine at position 54 (M-5-U54) in all tRNAs. This Microcystis aeruginosa (strain NIES-843 / IAM M-2473) protein is Methylenetetrahydrofolate--tRNA-(uracil-5-)-methyltransferase TrmFO.